We begin with the raw amino-acid sequence, 937 residues long: Translation initiation factor IF-2 (937 aa).

The tract at residues 47–352 (RAAFQTKATP…EMPQRKERPL (306 aa)) is disordered. Positions 52-68 (TKATPAASKPATPAAPK) are enriched in low complexity. A compositionally biased stretch (polar residues) spans 97-116 (QHSNNRPQANANRNGQASNG). Positions 117–153 (QNRTNNARPNNNSARPNNSRPNTNSRPNNNSQNRSTS) are enriched in low complexity. A compositionally biased stretch (polar residues) spans 154–169 (ANHPMSLQEQISQANA). Residues 173-197 (RTQERIQQQREQREADEKKRREQAN) show a composition bias toward basic and acidic residues. The segment covering 202 to 229 (TRNNASNNRPSNGKPTNGARPTTNSPRP) has biased composition (polar residues). Low complexity predominate over residues 240–269 (SSRPNNNNSARPNTTNNRPTNSRPATTPSR). The segment covering 274 to 298 (QEMQQKMQANTVSASKPASNNTASK) has biased composition (polar residues). A compositionally biased stretch (basic residues) spans 322 to 331 (FNKKRKKTRK). Basic and acidic residues predominate over residues 339 to 352 (AAKKEMPQRKERPL). The region spanning 438 to 607 (SRPPVVTIMG…LLEADVLELK (170 aa)) is the tr-type G domain. Positions 447–454 (GHVDHGKT) are G1. 447 to 454 (GHVDHGKT) provides a ligand contact to GTP. Positions 472-476 (GITQH) are G2. The G3 stretch occupies residues 493–496 (DTPG). GTP-binding positions include 493–497 (DTPGH) and 547–550 (NKID). The interval 547–550 (NKID) is G4. The G5 stretch occupies residues 583–585 (SAK).

It belongs to the TRAFAC class translation factor GTPase superfamily. Classic translation factor GTPase family. IF-2 subfamily.

It localises to the cytoplasm. In terms of biological role, one of the essential components for the initiation of protein synthesis. Protects formylmethionyl-tRNA from spontaneous hydrolysis and promotes its binding to the 30S ribosomal subunits. Also involved in the hydrolysis of GTP during the formation of the 70S ribosomal complex. This chain is Translation initiation factor IF-2, found in Latilactobacillus sakei subsp. sakei (strain 23K) (Lactobacillus sakei subsp. sakei).